The sequence spans 430 residues: Enolase (430 aa).

Glutamine 165 serves as a coordination point for (2R)-2-phosphoglycerate. Glutamate 207 acts as the Proton donor in catalysis. Residues aspartate 244, glutamate 287, and aspartate 314 each coordinate Mg(2+). Positions 339, 368, 369, and 390 each coordinate (2R)-2-phosphoglycerate. Lysine 339 (proton acceptor) is an active-site residue.

This sequence belongs to the enolase family. As to quaternary structure, component of the RNA degradosome, a multiprotein complex involved in RNA processing and mRNA degradation. Mg(2+) is required as a cofactor.

The protein localises to the cytoplasm. Its subcellular location is the secreted. It localises to the cell surface. It catalyses the reaction (2R)-2-phosphoglycerate = phosphoenolpyruvate + H2O. It functions in the pathway carbohydrate degradation; glycolysis; pyruvate from D-glyceraldehyde 3-phosphate: step 4/5. Functionally, catalyzes the reversible conversion of 2-phosphoglycerate (2-PG) into phosphoenolpyruvate (PEP). It is essential for the degradation of carbohydrates via glycolysis. This Xanthomonas axonopodis pv. citri (strain 306) protein is Enolase.